A 142-amino-acid polypeptide reads, in one-letter code: Ninjurin-2 (142 aa).

The interval 1–21 (MESARENIDLQPGSSDPRSQP) is disordered. The Extracellular segment spans residues 1–60 (MESARENIDLQPGSSDPRSQPINLNHYATKKSVAESMLDVALFMSNAMRLKAVLEQGPSS). Residues 12 to 21 (PGSSDPRSQP) show a composition bias toward polar residues. The tract at residues 25–37 (NHYATKKSVAESM) is helix alpha1. The interval 38-57 (LDVALFMSNAMRLKAVLEQG) is helix alpha2. Residues 61–92 (HYYTTLVTLISLSLLLQVVIGVLLVVIARLNL) form a helical membrane-spanning segment. At 93–96 (NEVE) the chain is on the cytoplasmic side. A helical transmembrane segment spans residues 97–126 (KQWRLNQLNNAATILVFFTVVINVFITAFG). A cholesterol-binding site is contributed by Gln-103. The Extracellular segment spans residues 127–142 (AHKTGFLAARASRNPL).

The protein belongs to the ninjurin family. As to quaternary structure, homooligomer; in response to stimuli, homooligomerizes into filaments. In contrast to NINJ1, the filament is curved toward the intracellular space, preventing its circularization on a relatively flat membrane to mediate plasma membrane rupture: curvature is caused by cholesterol-binding at the cytoplasmic leaflet. As to expression, widely expressed. In adult, higher expression in the bone marrow and peripheral blood lymphocytes, medium in the lung, lymph node, thyroid, uterus, thymus, spleen, prostate and skeletal muscle, lower in the liver, placenta, brain, heart and kidney. In embryo, higher expression in the thymus, heart and liver, lower in the spleen, lung, brain and kidney.

It is found in the cell membrane. In terms of biological role, its role in unclear. In contrast to NINJ1 paralog, does not mediate plasma membrane rupture (cytolysis) downstream of necroptotic and pyroptotic programmed cell death. While it is able to oligomerize and form filaments, filaments are curved toward the intracellular space, preventing circularization to mediate plasma membrane rupture. May act as a homophilic transmembrane adhesion molecule involved in nerve regeneration. Promotes axonal growth. The sequence is that of Ninjurin-2 from Homo sapiens (Human).